A 1111-amino-acid chain; its full sequence is MPDQDTKAKSTEKTADKQQGTTTRDYSDLKRLRCLLNVQSSKQQLPAINFDSAQNNMTKSEPTIRTGGHRARGQWHESTEAVELENFSINYKNERNFSKHPQHQLFQEIFTALVRNRLICREWVNRAPSIHFLRVLICLRLLMRDPCYQEILHKLGGIEDLAQYMEIVANEYLGYAEEQHCVDKLVNMTYIFQKLAAVKDQREWVTASGAHKTLVSLLGARDTTVLLGALLALASLAESSECREKISELNVVENLLMILHEYDLLSKRLTAELLRLLCAEPQIKEQVKLYEGIPILLSLLHSDHLKLLWSVIWILVQVCEDPETSVEIRIWGGIKQLLHILQGDRNFVSDRSSIGSLSSANAAGRIQQLHLSEDLSPGEIEENTVSLQAACCAALTELALNDTNAHQVVQENGVYTIAKLILPNKQSNAAQTNLLQCYAFRTLRFLFSMERNRPLFKRLFPTDLFETFIDIGHYVRDIGAYKDLVSQLNLLLEDELKQIAENIESINQKKAPLKYIGDYAVLDHLGSGAFGCVYKVRKRSGQNLLAMKEVNLHNPAFGKDKKDRDSSVKNIVSELTIIKEQLYHPNVVRYYKTFLENDRLYIVMELIEGAPLGEHFNSLKEKHHHFSEERLWKIFIQLCLALRYLHKEKRIVHRDLTPNNIMLGDKDKVTVTDFGLAKQKQESSKLTSMVGTILYSCPEVLKSEPYGEKADVWAAGCILYQMATLSPPFCSTNMLSLATKIVEAVYEPVPEGIYSEKVTDTIRRCLTPDAEARPDIVEVSSMISDVMMKYLDRLSTSQLALERKLERERRRTQRYFMEANRNAVTCHHELALLSQETFEKASLSSSSSGAASLKSELSESAELPGEGCHIPCGKEEDRVCEEVLSEDNFQLESVEKDLYSELDDELDVSDNCSSSSSSPLKESTFSILKRSFSASGRERHSQARDFIAGLGSRPRPGPQMSTFVVESASAGIAVSQRKVRQICDPIQQILIQLHKVIYITQLPPALHHDLKRRVIERFKKSLFSQQSNPCNLKSEIKKLSQGSPEPIELNFLTSDYHSLRHSRAANNWSPSDPTGSPSSFEVEEGVTYEQMQTVIEEVLEESGYYNFTTKR.

Basic and acidic residues predominate over residues 1–16 (MPDQDTKAKSTEKTAD). 2 disordered regions span residues 1–24 (MPDQ…TTTR) and 47–72 (AINF…HRAR). The segment covering 47–63 (AINFDSAQNNMTKSEPT) has biased composition (polar residues). The stretch at 481 to 514 (YKDLVSQLNLLLEDELKQIAENIESINQKKAPLK) forms a coiled coil. The region spanning 519–791 (YAVLDHLGSG…MISDVMMKYL (273 aa)) is the Protein kinase domain. Residues 525–533 (LGSGAFGCV) and K548 contribute to the ATP site. The active-site Proton acceptor is the D655.

The protein belongs to the protein kinase superfamily. NEK Ser/Thr protein kinase family. NIMA subfamily. As to quaternary structure, interacts with RAF1 and MAP2K1; the interaction is direct with RAF1 and required for ERK1/2-signaling pathway activation in response to UV irradiation. It depends on Mg(2+) as a cofactor. As to expression, expressed in the mammary gland, lung, spleen, and kidney.

It carries out the reaction L-seryl-[protein] + ATP = O-phospho-L-seryl-[protein] + ADP + H(+). The enzyme catalyses L-threonyl-[protein] + ATP = O-phospho-L-threonyl-[protein] + ADP + H(+). Plays a role in the cellular response to UV irradiation. Mediates G2/M cell cycle arrest, MEK autoactivation and ERK1/2-signaling pathway activation in response to UV irradiation. In ciliated cells, it is involved in the regulation of mucociliary transport. This chain is Serine/threonine-protein kinase Nek10, found in Mus musculus (Mouse).